The sequence spans 169 residues: Peptidyl-prolyl cis-trans isomerase (169 aa).

In terms of domain architecture, PPIase cyclophilin-type spans 5–168 (FFDMTIGGQP…SEVKIAKCGQ (164 aa)).

It belongs to the cyclophilin-type PPIase family.

It is found in the cytoplasm. It carries out the reaction [protein]-peptidylproline (omega=180) = [protein]-peptidylproline (omega=0). With respect to regulation, binds cyclosporin A (CsA). CsA mediates some of its effects via an inhibitory action on PPIase. In terms of biological role, PPIases accelerate the folding of proteins. It catalyzes the cis-trans isomerization of proline imidic peptide bonds in oligopeptides. The sequence is that of Peptidyl-prolyl cis-trans isomerase from Unspecified eudicot DB-1992.